Reading from the N-terminus, the 513-residue chain is Cytochrome P450 72A552 (513 aa).

The chain crosses the membrane as a helical span at residues 2 to 22 (EISVASVTVSVVIAVVTWWVW). Cysteine 460 contacts heme.

Belongs to the cytochrome P450 family. Heme serves as cofactor.

The protein resides in the membrane. It carries out the reaction oleanolate + reduced [NADPH--hemoprotein reductase] + O2 = hederagenin + oxidized [NADPH--hemoprotein reductase] + H2O + H(+). In terms of biological role, catalyzes the oxidation of oleanolate at the C-23 position to form hederagenin. In Barbarea vulgaris (Yellow rocket), this protein is Cytochrome P450 72A552.